A 420-amino-acid polypeptide reads, in one-letter code: 3-isopropylmalate dehydratase large subunit (420 aa).

Cysteine 300, cysteine 360, and cysteine 363 together coordinate [4Fe-4S] cluster.

Belongs to the aconitase/IPM isomerase family. LeuC type 2 subfamily. As to quaternary structure, heterodimer of LeuC and LeuD. Requires [4Fe-4S] cluster as cofactor.

The catalysed reaction is (2R,3S)-3-isopropylmalate = (2S)-2-isopropylmalate. It participates in amino-acid biosynthesis; L-leucine biosynthesis; L-leucine from 3-methyl-2-oxobutanoate: step 2/4. Functionally, catalyzes the isomerization between 2-isopropylmalate and 3-isopropylmalate, via the formation of 2-isopropylmaleate. This is 3-isopropylmalate dehydratase large subunit from Heliobacterium modesticaldum (strain ATCC 51547 / Ice1).